The sequence spans 220 residues: Guanylate kinase (220 aa).

Positions 15–194 (GLMLVISSPS…AFEGIEAIVK (180 aa)) constitute a Guanylate kinase-like domain. 22–29 (SPSGAGKS) contributes to the ATP binding site.

The protein belongs to the guanylate kinase family.

The protein resides in the cytoplasm. It carries out the reaction GMP + ATP = GDP + ADP. Functionally, essential for recycling GMP and indirectly, cGMP. The polypeptide is Guanylate kinase (Agrobacterium fabrum (strain C58 / ATCC 33970) (Agrobacterium tumefaciens (strain C58))).